Consider the following 170-residue polypeptide: Transcriptional repressor NrdR (170 aa).

A zinc finger spans residues 3 to 34 (CPFCRHPDSRVVDSRVTDDGTAIRRRRSCPEC). The ATP-cone domain occupies 46–136 (LSVIKRSGVI…VYRGFESLED (91 aa)). Positions 151–170 (ERSETVERGRPVPSRGVDDR) are disordered.

This sequence belongs to the NrdR family. It depends on Zn(2+) as a cofactor.

Negatively regulates transcription of bacterial ribonucleotide reductase nrd genes and operons by binding to NrdR-boxes. The polypeptide is Transcriptional repressor NrdR (Acidothermus cellulolyticus (strain ATCC 43068 / DSM 8971 / 11B)).